We begin with the raw amino-acid sequence, 219 residues long: 2-hydroxy-3-keto-5-methylthiopentenyl-1-phosphate phosphatase (219 aa).

This sequence belongs to the HAD-like hydrolase superfamily. MtnX family.

It carries out the reaction 2-hydroxy-5-methylsulfanyl-3-oxopent-1-enyl phosphate + H2O = 1,2-dihydroxy-5-(methylsulfanyl)pent-1-en-3-one + phosphate. It participates in amino-acid biosynthesis; L-methionine biosynthesis via salvage pathway; L-methionine from S-methyl-5-thio-alpha-D-ribose 1-phosphate: step 4/6. In terms of biological role, dephosphorylates 2-hydroxy-3-keto-5-methylthiopentenyl-1-phosphate (HK-MTPenyl-1-P) yielding 1,2-dihydroxy-3-keto-5-methylthiopentene (DHK-MTPene). This chain is 2-hydroxy-3-keto-5-methylthiopentenyl-1-phosphate phosphatase, found in Bacillus cereus (strain ZK / E33L).